The primary structure comprises 556 residues: Probable zinc metalloprotease EGY2, chloroplastic (556 aa).

The transit peptide at 1–64 (MNLAVASFRG…VFRKRETLVR (64 aa)) directs the protein to the chloroplast. A disordered region spans residues 63–133 (VRVTETQTEP…DGDKLEVSSG (71 aa)). The next 7 membrane-spanning stretches (helical) occupy residues 267–287 (AVPE…TLFL), 311–331 (LPGA…HILV), 336–356 (GIKL…FGAI), 374–394 (AAGP…GLFV), 437–457 (PLVI…IPAG), 484–504 (LLGL…LIFF), and 527–547 (LGIL…FAFT).

It belongs to the peptidase M50B family.

The protein resides in the plastid. It is found in the chloroplast membrane. In terms of biological role, probable membrane-associated metalloprotease that may be involved in chloroplast development. The polypeptide is Probable zinc metalloprotease EGY2, chloroplastic (EGY2) (Arabidopsis thaliana (Mouse-ear cress)).